A 294-amino-acid polypeptide reads, in one-letter code: Type I ribosome-inactivating protein trichoanguina (294 aa).

The N-terminal stretch at 1–19 (MALSFFFLAISLGSPTAIG) is a signal peptide. Asparagine 70 is a glycosylation site (N-linked (GlcNAc...) asparagine). Catalysis depends on residues glutamate 177 and arginine 180. Asparagine 220 is a glycosylation site (N-linked (GlcNAc...) asparagine). A propeptide spanning residues 265–294 (VGSEYDIPTTILHPGAMGMLHNQNGNYVTM) is cleaved from the precursor.

The protein belongs to the ribosome-inactivating protein family. Type 1 RIP subfamily.

It catalyses the reaction Endohydrolysis of the N-glycosidic bond at one specific adenosine on the 28S rRNA.. Functionally, inhibits protein synthesis by depurinating 28S rRNA in ribosomes. This is Type I ribosome-inactivating protein trichoanguina (TCA) from Trichosanthes anguina (Snake gourd).